Consider the following 368-residue polypeptide: MWIKELELKHYRNYDHLLASFSSGLNVFIGNNAQGKTNFLEAIYFLSLTRSHRTRADKELIHFDHSTVSLTGKIQRISGTVDLEINLSDKGRVTKINALKQAKLSDYIGTMMVVLFAPEDLQLVKGAPSLRRKFIDIDLGQIKPVYLSELSHYNHVLKQRNSYLKSAQQIDAAFLAVLDEQLASYGARVMEHRIDFINALEKEANTHHQAISNGLESLSLSYQSSVVFDKKTNIYQQFLHQLEKNHQKDFFRKNTSVGPHRDDLAFYINGMNANFASQGQHRSLILSLKMAEVSLMKALTGDNPILLLDDVMSELDNTRQTKLLETVIKENVQTFITTTSLDHLSQLPEGIRIFHVTKGTVQIDSDIH.

ATP is bound at residue 30–37 (GNNAQGKT).

The protein belongs to the RecF family.

It is found in the cytoplasm. Its function is as follows. The RecF protein is involved in DNA metabolism; it is required for DNA replication and normal SOS inducibility. RecF binds preferentially to single-stranded, linear DNA. It also seems to bind ATP. In Streptococcus pyogenes serotype M49 (strain NZ131), this protein is DNA replication and repair protein RecF.